The sequence spans 447 residues: Glucose-6-phosphate isomerase (447 aa).

The active-site Proton donor is the E287. Residues H308 and K422 contribute to the active site.

It belongs to the GPI family.

The protein resides in the cytoplasm. The catalysed reaction is alpha-D-glucose 6-phosphate = beta-D-fructose 6-phosphate. It functions in the pathway carbohydrate biosynthesis; gluconeogenesis. The protein operates within carbohydrate degradation; glycolysis; D-glyceraldehyde 3-phosphate and glycerone phosphate from D-glucose: step 2/4. Its function is as follows. Catalyzes the reversible isomerization of glucose-6-phosphate to fructose-6-phosphate. The protein is Glucose-6-phosphate isomerase of Heliobacterium modesticaldum (strain ATCC 51547 / Ice1).